Reading from the N-terminus, the 27-residue chain is Potassium channel toxin kappa-KTx 2.2 (27 aa).

2 disulfide bridges follow: Cys3-Cys21 and Cys7-Cys17.

It belongs to the short scorpion toxin superfamily. Potassium channel inhibitor kappa-KTx family. Kappa-KTx 2 subfamily. As to expression, expressed by the venom gland.

Its subcellular location is the secreted. Its function is as follows. OmTx1 decreases the amplitude of the potassium current of the rat channels Kv1.1/KCNA1 by 17% and Kv1.2/KCNA2 by 12% as well as human Kv1.3/KCNA3 by 24%. Functionally, omTx2 decreases the amplitude of the potassium current of the rat channels Kv1.1/KCNA1 by 8% and Kv1.2/KCNA2 by 10% as well as human Kv1.3/KCNA3 by 36%. Also alters glucose-induced insulin release from pancreatic islets. This chain is Potassium channel toxin kappa-KTx 2.2, found in Opisthacanthus madagascariensis (Scorpion).